Here is a 239-residue protein sequence, read N- to C-terminus: tRNA (guanine-N(7)-)-methyltransferase (239 aa).

4 residues coordinate S-adenosyl-L-methionine: Glu-69, Glu-94, Asp-121, and Asp-144. Residue Asp-144 is part of the active site. Residues Lys-148, Asp-180, and 217 to 220 (TKFE) each bind substrate.

Belongs to the class I-like SAM-binding methyltransferase superfamily. TrmB family.

It carries out the reaction guanosine(46) in tRNA + S-adenosyl-L-methionine = N(7)-methylguanosine(46) in tRNA + S-adenosyl-L-homocysteine. It participates in tRNA modification; N(7)-methylguanine-tRNA biosynthesis. Catalyzes the formation of N(7)-methylguanine at position 46 (m7G46) in tRNA. The sequence is that of tRNA (guanine-N(7)-)-methyltransferase from Pseudoalteromonas atlantica (strain T6c / ATCC BAA-1087).